The primary structure comprises 467 residues: 3-isopropylmalate dehydratase large subunit (467 aa).

[4Fe-4S] cluster-binding residues include C348, C408, and C411. The tract at residues 417–445 (DQLTPGERSASTSNRNFEGRQGKGGRTHL) is disordered.

It belongs to the aconitase/IPM isomerase family. LeuC type 1 subfamily. In terms of assembly, heterodimer of LeuC and LeuD. Requires [4Fe-4S] cluster as cofactor.

It catalyses the reaction (2R,3S)-3-isopropylmalate = (2S)-2-isopropylmalate. The protein operates within amino-acid biosynthesis; L-leucine biosynthesis; L-leucine from 3-methyl-2-oxobutanoate: step 2/4. Catalyzes the isomerization between 2-isopropylmalate and 3-isopropylmalate, via the formation of 2-isopropylmaleate. The chain is 3-isopropylmalate dehydratase large subunit from Saccharopolyspora erythraea (strain ATCC 11635 / DSM 40517 / JCM 4748 / NBRC 13426 / NCIMB 8594 / NRRL 2338).